The primary structure comprises 174 residues: SUSHI domain-containing protein E3 (174 aa).

The first 20 residues, 1-20, serve as a signal peptide directing secretion; the sequence is MATEVQFACALVVLLGCGYA. One can recognise a Sushi domain in the interval 35 to 97; sequence QNCTTYPSIE…WTNGPPSCVK (63 aa). Disulfide bonds link cysteine 37/cysteine 78 and cysteine 64/cysteine 95. The segment covering 108–127 has biased composition (low complexity); sequence STSTTPVTTGTFPDPQNTTH. Residues 108-133 form a disordered region; sequence STSTTPVTTGTFPDPQNTTHPTHHTV. A helical membrane pass occupies residues 145–165; sequence FGYTPWAIITLVVIILLVVWI.

It is found in the host membrane. In Equine herpesvirus 2 (strain 86/87) (EHV-2), this protein is SUSHI domain-containing protein E3 (E3).